The chain runs to 509 residues: L-arabinose isomerase (509 aa).

Glu-313, Glu-340, His-357, and His-456 together coordinate Mn(2+).

It belongs to the arabinose isomerase family. Mn(2+) is required as a cofactor.

It carries out the reaction beta-L-arabinopyranose = L-ribulose. Its pathway is carbohydrate degradation; L-arabinose degradation via L-ribulose; D-xylulose 5-phosphate from L-arabinose (bacterial route): step 1/3. Functionally, catalyzes the conversion of L-arabinose to L-ribulose. The protein is L-arabinose isomerase of Bacteroides thetaiotaomicron (strain ATCC 29148 / DSM 2079 / JCM 5827 / CCUG 10774 / NCTC 10582 / VPI-5482 / E50).